Here is a 225-residue protein sequence, read N- to C-terminus: Uracil-DNA glycosylase (225 aa).

The active-site Proton acceptor is the Asp67.

This sequence belongs to the uracil-DNA glycosylase (UDG) superfamily. UNG family.

Its subcellular location is the cytoplasm. It carries out the reaction Hydrolyzes single-stranded DNA or mismatched double-stranded DNA and polynucleotides, releasing free uracil.. Its function is as follows. Excises uracil residues from the DNA which can arise as a result of misincorporation of dUMP residues by DNA polymerase or due to deamination of cytosine. The polypeptide is Uracil-DNA glycosylase (Coxiella burnetii (strain Dugway 5J108-111)).